Reading from the N-terminus, the 331-residue chain is Putative serine/threonine-protein kinase ZK507.1 (331 aa).

The Protein kinase domain occupies 1-270; the sequence is MKVNEEGFAI…CKLTLKEPLV (270 aa). D116 functions as the Proton acceptor in the catalytic mechanism. Basic and acidic residues predominate over residues 302–314; the sequence is SDRNEENSLDRSK. Residues 302 to 331 form a disordered region; sequence SDRNEENSLDRSKTGTLSFNNSKNKKPSRY.

This sequence belongs to the protein kinase superfamily. Ser/Thr protein kinase family.

It carries out the reaction L-seryl-[protein] + ATP = O-phospho-L-seryl-[protein] + ADP + H(+). It catalyses the reaction L-threonyl-[protein] + ATP = O-phospho-L-threonyl-[protein] + ADP + H(+). The chain is Putative serine/threonine-protein kinase ZK507.1 from Caenorhabditis elegans.